A 417-amino-acid polypeptide reads, in one-letter code: D-glycerate 2-kinase (417 aa).

It belongs to the glycerate kinase type-1 family. As to quaternary structure, homodimer. Mg(2+) is required as a cofactor.

It carries out the reaction (R)-glycerate + ATP = (2R)-2-phosphoglycerate + ADP + H(+). In terms of biological role, involved in the degradation of serine via 3-hydroxypyruvate. Catalyzes the ATP-dependent phosphorylation of D-glycerate to 2-phosphoglycerate. In Thermotoga maritima (strain ATCC 43589 / DSM 3109 / JCM 10099 / NBRC 100826 / MSB8), this protein is D-glycerate 2-kinase.